Reading from the N-terminus, the 688-residue chain is Subtilisin-like protease 1 (688 aa).

Positions 1–25 (MMLNKKVVALCTLTLHLFCIFLCLG) are cleaved as a signal peptide. A propeptide spans 26–217 (KEVRSEENGK…IESDKLVSAD (192 aa)) (inhibition peptide). The tract at residues 99–129 (EKNKNDNHNNNNNNISSSSSSSSNTFGEEKE) is disordered. The span at 106-122 (HNNNNNNISSSSSSSSN) shows a compositional bias: low complexity. Asn-112 carries N-linked (GlcNAc...) asparagine glycosylation. Residues Asn-145, Thr-148, and Pro-150 each contribute to the Ca(2+) site. Asn-171 carries N-linked (GlcNAc...) asparagine glycosylation. Gly-205 is a Ca(2+) binding site. N-linked (GlcNAc...) asparagine glycosylation occurs at Asn-261. Disordered stretches follow at residues 264-284 (HAATSKRKRHSTNERGYDTFS) and 303-332 (NNNNYYYSHSSNGHNSSSRNSSSSRSRPGK). The span at 303–328 (NNNNYYYSHSSNGHNSSSRNSSSSRS) shows a compositional bias: low complexity. N-linked (GlcNAc...) asparagine glycosylation is found at Asn-317 and Asn-322. Ca(2+) is bound at residue Asp-337. A Peptidase S8 domain is found at 343–661 (QWGLDLSRLD…AGYADINKAV (319 aa)). Intrachain disulfides connect Cys-369-Cys-479 and Cys-458-Cys-475. Asp-372 (charge relay system) is an active-site residue. Positions 381, 392, 396, 399, 400, 401, 402, 404, 406, 408, and 409 each coordinate Ca(2+). An N-linked (GlcNAc...) asparagine glycan is attached at Asn-417. The Charge relay system role is filled by His-428. Residues Ile-439, Asn-442, Ile-444, and Val-446 each contribute to the Ca(2+) site. N-linked (GlcNAc...) asparagine glycans are attached at residues Asn-488, Asn-501, and Asn-520. A disulfide bridge connects residues Cys-521 and Cys-534. Asn-603 is a glycosylation site (N-linked (GlcNAc...) asparagine). The active-site Charge relay system is the Ser-606. Asn-675 carries an N-linked (GlcNAc...) asparagine glycan.

It belongs to the peptidase S8 family. In terms of assembly, heterodimer between p54 form and prodomain p31; the interaction inhibits p54 catalytic activity. Heterodimer p31-p54 is monomeric at basic pH and dimeric at acidic pH; dimerization is driven by the N-terminal prodomain (p31). Requires Ca(2+) as cofactor. Post-translationally, the prodomain (p31) is cleaved, probably by autocatalysis, during the transport to or in the Golgi apparatus, and remains non-covalently associated with the p54 form as an inhibitor. p54 is further cleaved into the p47 form. The p54-to-p47 conversion can be also autocatalytic. This cleavage is likely occurring in the exoneme prior to egress and is mediated by PMX/plasmepsin X. Heterodimer p31-p54 is activated by cleavage of prodomain (p31) by the aspartic protease PMX; cleavage by PMX abolishes inhibitory capacity of p31. Primary autocatalytic processing of SUB1 is essential for parasite growth; the p54-to-p47 conversion is dispensable for SUB1 functions in the parasites. The disulfide bond between Cys-521 and Cys-534 acts as a redox-sensitive disulfide switch. The oxidized form is required for catalytic activity. In terms of processing, the relevance of the N-glycosylation is not clear. In an insect expression system, SUB1 glycosylation appears to affect its processing into the active mature form suggesting that SUB1 may not be N-glycosylated in parasites.

It localises to the secreted. Its subcellular location is the parasitophorous vacuole lumen. The catalysed reaction is Hydrolysis of proteins with broad specificity for peptide bonds, and a preference for a large uncharged residue in P1. Hydrolyzes peptide amides.. With respect to regulation, p54 and probably p47 forms are inhibited by the non-covalent interaction with the cleaved propeptide. Inhibited by subtilisin propeptide-like protein SUB1-ProM. Inhibited by small molecule MRT12113. Functionally, serine protease which plays an essential role in merozoite invasion of and egress from host erythrocytes by processing and activating various merozoite surface and parasitophorous vacuole proteins. Mediates the proteolytic maturation of serine proteases SERA4, SERA5 and SERA6 just prior to merozoite egress. Prior to merozoite egress, cleaves merozoite surface proteins MSP1, MSP6 and MSP7, which form the MSP1/6/7 complex, and thereby may prime the parasite cell surface for invasion of fresh erythrocytes. Prior to merozoite egress, cleaves MSRP2 converting it to MSRP2 p25 form, and RAP1 converting it to RAP1 p67 form. In Plasmodium falciparum (isolate 3D7), this protein is Subtilisin-like protease 1.